We begin with the raw amino-acid sequence, 220 residues long: Carbonic anhydrase (220 aa).

The Zn(2+) site is built by cysteine 39, aspartate 41, histidine 98, and cysteine 101.

The protein belongs to the beta-class carbonic anhydrase family. The cofactor is Zn(2+).

It catalyses the reaction hydrogencarbonate + H(+) = CO2 + H2O. This is Carbonic anhydrase (cynT) from Pseudomonas aeruginosa (strain ATCC 15692 / DSM 22644 / CIP 104116 / JCM 14847 / LMG 12228 / 1C / PRS 101 / PAO1).